We begin with the raw amino-acid sequence, 211 residues long: ATP phosphoribosyltransferase (211 aa).

It belongs to the ATP phosphoribosyltransferase family. Short subfamily. In terms of assembly, heteromultimer composed of HisG and HisZ subunits.

The protein resides in the cytoplasm. The enzyme catalyses 1-(5-phospho-beta-D-ribosyl)-ATP + diphosphate = 5-phospho-alpha-D-ribose 1-diphosphate + ATP. It functions in the pathway amino-acid biosynthesis; L-histidine biosynthesis; L-histidine from 5-phospho-alpha-D-ribose 1-diphosphate: step 1/9. Functionally, catalyzes the condensation of ATP and 5-phosphoribose 1-diphosphate to form N'-(5'-phosphoribosyl)-ATP (PR-ATP). Has a crucial role in the pathway because the rate of histidine biosynthesis seems to be controlled primarily by regulation of HisG enzymatic activity. This Sorangium cellulosum (strain So ce56) (Polyangium cellulosum (strain So ce56)) protein is ATP phosphoribosyltransferase.